Consider the following 345-residue polypeptide: 3-isopropylmalate dehydrogenase (345 aa).

NAD(+) is bound at residue 74-87; that stretch reads GPKWDGLPRKIRPE. Arg-94, Arg-104, Arg-132, and Asp-217 together coordinate substrate. Mg(2+) contacts are provided by Asp-217, Asp-241, and Asp-245. 274–286 contacts NAD(+); sequence GSAPDIAGKGIAN.

It belongs to the isocitrate and isopropylmalate dehydrogenases family. LeuB type 1 subfamily. Homodimer. It depends on Mg(2+) as a cofactor. The cofactor is Mn(2+).

The protein localises to the cytoplasm. It catalyses the reaction (2R,3S)-3-isopropylmalate + NAD(+) = 4-methyl-2-oxopentanoate + CO2 + NADH. The protein operates within amino-acid biosynthesis; L-leucine biosynthesis; L-leucine from 3-methyl-2-oxobutanoate: step 3/4. Catalyzes the oxidation of 3-carboxy-2-hydroxy-4-methylpentanoate (3-isopropylmalate) to 3-carboxy-4-methyl-2-oxopentanoate. The product decarboxylates to 4-methyl-2 oxopentanoate. The sequence is that of 3-isopropylmalate dehydrogenase (leuB) from Thermus thermophilus (strain ATCC 27634 / DSM 579 / HB8).